The chain runs to 423 residues: UDP-N-acetylglucosamine 1-carboxyvinyltransferase 2 (423 aa).

23 to 24 contributes to the phosphoenolpyruvate binding site; it reads KN. Arginine 93 serves as a coordination point for UDP-N-acetyl-alpha-D-glucosamine. Cysteine 117 functions as the Proton donor in the catalytic mechanism. Cysteine 117 carries the post-translational modification 2-(S-cysteinyl)pyruvic acid O-phosphothioketal. Residues 122-126, aspartate 305, and isoleucine 327 contribute to the UDP-N-acetyl-alpha-D-glucosamine site; that span reads RPIDQ.

It belongs to the EPSP synthase family. MurA subfamily.

It localises to the cytoplasm. The enzyme catalyses phosphoenolpyruvate + UDP-N-acetyl-alpha-D-glucosamine = UDP-N-acetyl-3-O-(1-carboxyvinyl)-alpha-D-glucosamine + phosphate. The protein operates within cell wall biogenesis; peptidoglycan biosynthesis. Cell wall formation. Adds enolpyruvyl to UDP-N-acetylglucosamine. This Listeria monocytogenes serovar 1/2a (strain ATCC BAA-679 / EGD-e) protein is UDP-N-acetylglucosamine 1-carboxyvinyltransferase 2.